Reading from the N-terminus, the 670-residue chain is Meiotic sister-chromatid recombination protein 6, mitochondrial (670 aa).

The N-terminal 27 residues, M1–A27, are a transit peptide targeting the mitochondrion.

It localises to the mitochondrion. Its function is as follows. May be involved in the control of meiotic sister-chromatid recombination. The polypeptide is Meiotic sister-chromatid recombination protein 6, mitochondrial (MSC6) (Eremothecium gossypii (strain ATCC 10895 / CBS 109.51 / FGSC 9923 / NRRL Y-1056) (Yeast)).